Consider the following 131-residue polypeptide: MKKTTVINSELSTVIAGMGHMDWLSIGDAGMPVPMGTQKIDLALTKQLPSFQDVLKNVLSELAVQKIYLAEEIKTQNPEQLAAIQALLPDVEVAFVPHSQLKQDLAKTHAFVRTGEMTPFSNIILESGVTF.

The active-site Proton donor is the His-20. Residues Asp-28, His-98, and 120-122 (FSN) each bind substrate.

The protein belongs to the RbsD / FucU family. RbsD subfamily. Homodecamer.

Its subcellular location is the cytoplasm. It carries out the reaction beta-D-ribopyranose = beta-D-ribofuranose. It participates in carbohydrate metabolism; D-ribose degradation; D-ribose 5-phosphate from beta-D-ribopyranose: step 1/2. In terms of biological role, catalyzes the interconversion of beta-pyran and beta-furan forms of D-ribose. The protein is D-ribose pyranase of Levilactobacillus brevis (strain ATCC 367 / BCRC 12310 / CIP 105137 / JCM 1170 / LMG 11437 / NCIMB 947 / NCTC 947) (Lactobacillus brevis).